The sequence spans 103 residues: MIGKEVTIPDIILQEEFGQPIDLQCYENLTAEAPAEQELEAEEELIQGIPYKVIATCGGGCGARLRVFVLATDAAIRSFQELLLEELQFLCPQCREEIRNGGR.

Residues 1 to 47 (MIGKEVTIPDIILQEEFGQPIDLQCYENLTAEAPAEQELEAEEELIQ) are E7 terminal domain. The LXCXE motif; interaction with host RB1 and TMEM173/STING motif lies at 23 to 27 (LQCYE). A zinc finger spans residues 57–94 (CGGGCGARLRVFVLATDAAIRSFQELLLEELQFLCPQC). The short motif at 76 to 84 (IRSFQELLL) is the Nuclear export signal element.

This sequence belongs to the papillomaviridae E7 protein family. In terms of assembly, homodimer. Homooligomer. Interacts with host RB1; this interaction induces dissociation of RB1-E2F1 complex thereby disrupting RB1 activity. Interacts with host EP300; this interaction represses EP300 transcriptional activity. Interacts with protein E2; this interaction inhibits E7 oncogenic activity. Interacts with host TMEM173/STING; this interaction impairs the ability of TMEM173/STING to sense cytosolic DNA and promote the production of type I interferon (IFN-alpha and IFN-beta). Post-translationally, highly phosphorylated.

It localises to the host cytoplasm. It is found in the host nucleus. Plays a role in viral genome replication by driving entry of quiescent cells into the cell cycle. Stimulation of progression from G1 to S phase allows the virus to efficiently use the cellular DNA replicating machinery to achieve viral genome replication. E7 protein has both transforming and trans-activating activities. Induces the disassembly of the E2F1 transcription factor from RB1, with subsequent transcriptional activation of E2F1-regulated S-phase genes. Interferes with host histone deacetylation mediated by HDAC1 and HDAC2, leading to transcription activation. Also plays a role in the inhibition of both antiviral and antiproliferative functions of host interferon alpha. Interaction with host TMEM173/STING impairs the ability of TMEM173/STING to sense cytosolic DNA and promote the production of type I interferon (IFN-alpha and IFN-beta). This chain is Protein E7, found in Homo sapiens (Human).